Consider the following 327-residue polypeptide: Replication factor C small subunit (327 aa).

47 to 54 (GPPGTGKT) is a binding site for ATP.

This sequence belongs to the activator 1 small subunits family. RfcS subfamily. Heteromultimer composed of small subunits (RfcS) and large subunits (RfcL).

Part of the RFC clamp loader complex which loads the PCNA sliding clamp onto DNA. In Sulfurisphaera tokodaii (strain DSM 16993 / JCM 10545 / NBRC 100140 / 7) (Sulfolobus tokodaii), this protein is Replication factor C small subunit.